The sequence spans 548 residues: CTP synthase (548 aa).

Positions 1–276 (MPTELTDYDP…DQYVMEQLGL (276 aa)) are amidoligase domain. Position 25 (S25) interacts with CTP. UTP is bound at residue S25. 26 to 31 (GLGKGI) is a binding site for ATP. An L-glutamine-binding site is contributed by Y66. D83 is a binding site for ATP. Mg(2+) is bound by residues D83 and E151. CTP-binding positions include 158-160 (DIE), 197-202 (KTKPTQ), and K233. UTP contacts are provided by residues 197–202 (KTKPTQ) and K233. Residues 303–541 (DIALVGKYAM…VETILETTDT (239 aa)) enclose the Glutamine amidotransferase type-1 domain. G363 is an L-glutamine binding site. The Nucleophile; for glutamine hydrolysis role is filled by C390. L-glutamine contacts are provided by residues 391-394 (LGFQ), E414, and R471. Residues H514 and E516 contribute to the active site.

The protein belongs to the CTP synthase family. Homotetramer.

The enzyme catalyses UTP + L-glutamine + ATP + H2O = CTP + L-glutamate + ADP + phosphate + 2 H(+). The catalysed reaction is L-glutamine + H2O = L-glutamate + NH4(+). It carries out the reaction UTP + NH4(+) + ATP = CTP + ADP + phosphate + 2 H(+). It functions in the pathway pyrimidine metabolism; CTP biosynthesis via de novo pathway; CTP from UDP: step 2/2. Allosterically activated by GTP, when glutamine is the substrate; GTP has no effect on the reaction when ammonia is the substrate. The allosteric effector GTP functions by stabilizing the protein conformation that binds the tetrahedral intermediate(s) formed during glutamine hydrolysis. Inhibited by the product CTP, via allosteric rather than competitive inhibition. Catalyzes the ATP-dependent amination of UTP to CTP with either L-glutamine or ammonia as the source of nitrogen. Regulates intracellular CTP levels through interactions with the four ribonucleotide triphosphates. This chain is CTP synthase, found in Natronomonas pharaonis (strain ATCC 35678 / DSM 2160 / CIP 103997 / JCM 8858 / NBRC 14720 / NCIMB 2260 / Gabara) (Halobacterium pharaonis).